The primary structure comprises 418 residues: MSLLVIGINHTSASVDLREKVAFSPEKLTKALDELKNSDAIQSGVILSTCNRTEIYCEVKHGISSGYVINWLAEFHHVALEILMPSIYIHEEQAAVKHLMRVSCGLDSLVLGEPQILGQVKKAFADAREHNAVEGTIEKLFQQDFSVAKRVRTETNIGGNAVSVAYAACTLARQIFESLSDSTVLLVGAGETIELVAKHLDDSGCKRLIVANRTRERAMGLAEQFNAEVISLPEIPEHLPKADIIISSTASPLPIIGKGMVESALKLRKHQPMLFVDIAVPRDIEGEVAELNDAYLYSVDDLQSIIDHNIEQRKIEAIQAEAIVSEESAEFMTWIRSRQAVNSIRQYRENSEAMRIELLQKSMQALASGQNPEKVLAELSNKLTNKLIHAPTLAMQQAAKNGETEKLTVIRTTIGLDN.

Substrate-binding positions include 49 to 52, Ser108, 113 to 115, and Gln119; these read TCNR and EPQ. Cys50 functions as the Nucleophile in the catalytic mechanism. 188–193 serves as a coordination point for NADP(+); that stretch reads GAGETI.

Belongs to the glutamyl-tRNA reductase family. Homodimer.

It catalyses the reaction (S)-4-amino-5-oxopentanoate + tRNA(Glu) + NADP(+) = L-glutamyl-tRNA(Glu) + NADPH + H(+). It participates in porphyrin-containing compound metabolism; protoporphyrin-IX biosynthesis; 5-aminolevulinate from L-glutamyl-tRNA(Glu): step 1/2. Catalyzes the NADPH-dependent reduction of glutamyl-tRNA(Glu) to glutamate 1-semialdehyde (GSA). In Aliivibrio fischeri (strain MJ11) (Vibrio fischeri), this protein is Glutamyl-tRNA reductase.